The sequence spans 307 residues: Voltage-dependent anion channel-forming protein sll1024 (307 aa).

4 helical membrane-spanning segments follow: residues 26–46 (VIPA…GVTL), 54–74 (FSIP…LLVF), 226–246 (LIFL…HWAT), and 247–267 (AFVV…GVEI).

This sequence belongs to the anion channel-forming bestrophin (TC 1.A.46) family.

It is found in the cell membrane. In Synechocystis sp. (strain ATCC 27184 / PCC 6803 / Kazusa), this protein is Voltage-dependent anion channel-forming protein sll1024.